The sequence spans 73 residues: Lactogenin (73 aa).

Position 1 is a pyrrolidone carboxylic acid (Q1).

This sequence belongs to the pancreatic ribonuclease family. In terms of tissue distribution, milk.

It is found in the secreted. Functionally, secretory RNase specific towards pyrimidine bases, with higher activity towards poly C than poly U. Inhibits cell-free translation. The protein is Lactogenin of Bos taurus (Bovine).